A 319-amino-acid chain; its full sequence is ATP-dependent 6-phosphofructokinase (319 aa).

An ATP-binding site is contributed by G11. ADP is bound at residue 21 to 25; it reads RAAVR. ATP is bound by residues 72–73 and 102–105; these read RS and GDGS. D103 serves as a coordination point for Mg(2+). 125–127 provides a ligand contact to substrate; that stretch reads TID. The active-site Proton acceptor is D127. R154 lines the ADP pocket. Residues R162 and 169–171 each bind substrate; that span reads MGR. ADP contacts are provided by residues 185 to 187, R211, and 213 to 215; these read GAE and KKH. Residues E222, R243, and 249–252 each bind substrate; that span reads HIQR.

Belongs to the phosphofructokinase type A (PFKA) family. ATP-dependent PFK group I subfamily. Prokaryotic clade 'B1' sub-subfamily. Homotetramer. It depends on Mg(2+) as a cofactor.

The protein localises to the cytoplasm. It carries out the reaction beta-D-fructose 6-phosphate + ATP = beta-D-fructose 1,6-bisphosphate + ADP + H(+). It functions in the pathway carbohydrate degradation; glycolysis; D-glyceraldehyde 3-phosphate and glycerone phosphate from D-glucose: step 3/4. Its activity is regulated as follows. Allosterically activated by ADP and other diphosphonucleosides, and allosterically inhibited by phosphoenolpyruvate. Functionally, catalyzes the phosphorylation of D-fructose 6-phosphate to fructose 1,6-bisphosphate by ATP, the first committing step of glycolysis. The protein is ATP-dependent 6-phosphofructokinase of Brevibacillus brevis (strain 47 / JCM 6285 / NBRC 100599).